A 535-amino-acid polypeptide reads, in one-letter code: GMP synthase [glutamine-hydrolyzing] (535 aa).

Positions L21–T211 constitute a Glutamine amidotransferase type-1 domain. C98 serves as the catalytic Nucleophile. Catalysis depends on residues H185 and E187. The 199-residue stretch at W212–R410 folds into the GMPS ATP-PPase domain. S239–S245 lines the ATP pocket.

As to quaternary structure, homodimer.

It catalyses the reaction XMP + L-glutamine + ATP + H2O = GMP + L-glutamate + AMP + diphosphate + 2 H(+). It functions in the pathway purine metabolism; GMP biosynthesis; GMP from XMP (L-Gln route): step 1/1. In terms of biological role, catalyzes the synthesis of GMP from XMP. The sequence is that of GMP synthase [glutamine-hydrolyzing] from Thermosynechococcus vestitus (strain NIES-2133 / IAM M-273 / BP-1).